The following is a 215-amino-acid chain: RWD domain-containing protein C1393.09c (215 aa).

The RWD domain occupies 7–114 (EEREILESIY…SVAKEETNAI (108 aa)).

Its subcellular location is the cytoplasm. The protein resides in the nucleus. This is RWD domain-containing protein C1393.09c from Schizosaccharomyces pombe (strain 972 / ATCC 24843) (Fission yeast).